Reading from the N-terminus, the 389-residue chain is Succinate--CoA ligase [ADP-forming] subunit beta (389 aa).

The 236-residue stretch at 9-244 (KQLFAEYGLP…PSQEDEREAH (236 aa)) folds into the ATP-grasp domain. ATP is bound by residues K46, 53-55 (GRG), E99, T102, and E107. Mg(2+)-binding residues include N199 and D213. Substrate-binding positions include N264 and 321–323 (GIV).

The protein belongs to the succinate/malate CoA ligase beta subunit family. As to quaternary structure, heterotetramer of two alpha and two beta subunits. Requires Mg(2+) as cofactor.

It catalyses the reaction succinate + ATP + CoA = succinyl-CoA + ADP + phosphate. The enzyme catalyses GTP + succinate + CoA = succinyl-CoA + GDP + phosphate. The protein operates within carbohydrate metabolism; tricarboxylic acid cycle; succinate from succinyl-CoA (ligase route): step 1/1. In terms of biological role, succinyl-CoA synthetase functions in the citric acid cycle (TCA), coupling the hydrolysis of succinyl-CoA to the synthesis of either ATP or GTP and thus represents the only step of substrate-level phosphorylation in the TCA. The beta subunit provides nucleotide specificity of the enzyme and binds the substrate succinate, while the binding sites for coenzyme A and phosphate are found in the alpha subunit. This Teredinibacter turnerae (strain ATCC 39867 / T7901) protein is Succinate--CoA ligase [ADP-forming] subunit beta.